A 361-amino-acid polypeptide reads, in one-letter code: Phenylalanine--tRNA ligase alpha subunit (361 aa).

Position 260 (glutamate 260) interacts with Mg(2+).

The protein belongs to the class-II aminoacyl-tRNA synthetase family. Phe-tRNA synthetase alpha subunit type 1 subfamily. In terms of assembly, tetramer of two alpha and two beta subunits. Requires Mg(2+) as cofactor.

It is found in the cytoplasm. The enzyme catalyses tRNA(Phe) + L-phenylalanine + ATP = L-phenylalanyl-tRNA(Phe) + AMP + diphosphate + H(+). This is Phenylalanine--tRNA ligase alpha subunit from Bartonella quintana (strain Toulouse) (Rochalimaea quintana).